Reading from the N-terminus, the 1228-residue chain is Clustered mitochondria protein homolog (1228 aa).

In terms of domain architecture, Clu spans 298-557; it reads PSSLPSNSID…DNNPLDVGFA (260 aa). The TPR 1 repeat unit spans residues 486–519; that stretch reads CYGFDEASNKVIADAEFGSSLDDFAKVFHLKKHE. A coiled-coil region spans residues 671 to 702; sequence LGRVIELAEQELEAQRALREAHLQQVEADNKE. 2 TPR repeats span residues 982–1015 and 1108–1141; these read AESY…YERV and AVNE…FSKE.

This sequence belongs to the CLU family. May associate with the eukaryotic translation initiation factor 3 (eIF-3) complex.

The protein localises to the cytoplasm. MRNA-binding protein involved in proper cytoplasmic distribution of mitochondria. This is Clustered mitochondria protein homolog from Eremothecium gossypii (strain ATCC 10895 / CBS 109.51 / FGSC 9923 / NRRL Y-1056) (Yeast).